The sequence spans 393 residues: Purine permease 14 (393 aa).

Ala-2 is modified (N-acetylalanine). The next 10 helical transmembrane spans lie at 46–66 (WPTI…AKLL), 90–110 (TQSL…LIFI), 133–153 (LAVI…LAAM), 161–181 (GVFT…AAFI), 189–209 (WVVI…SSSF), 225–245 (WAAL…QNVF), 268–288 (VIIF…LIAG), 308–328 (VMAM…IVGL), 339–359 (VISV…FNFM), and 363–383 (FDAF…AYFF).

It belongs to the purine permeases (TC 2.A.7.14) family. As to expression, expressed in seedlings, leaves, embryos, ovules, seeds and the root and shoot meristems. In heart-stage embryos, detected in cells that failed to respond to cytokinins, including the prospective cotyledons.

The protein resides in the cell membrane. In terms of biological role, purine permease implicated in ATP-dependent cytokinin translocation that controls the spatiotemporal landscape of cytokinin signaling. Depletes ligands from the apoplast, which leads to a suppression of the cytokinin response. The polypeptide is Purine permease 14 (Arabidopsis thaliana (Mouse-ear cress)).